A 179-amino-acid polypeptide reads, in one-letter code: Tetratricopeptide repeat protein 36 (179 aa).

TPR repeat units lie at residues 43-76 (SSQL…CPLN), 77-110 (PSAY…AGPK), and 115-148 (CQAY…GSSF).

Belongs to the TTC36 family.

This is Tetratricopeptide repeat protein 36 from Caenorhabditis briggsae.